A 270-amino-acid polypeptide reads, in one-letter code: Nuclease P1 (270 aa).

A divalent metal cation-binding residues include W1, H6, H15, D45, and H60. 1–6 contacts substrate; the sequence is WGALGH. Residues 45–51, 60–63, and 73–78 each bind substrate; these read DEYRLTS, HFID, and NVDYER. 2 disulfides stabilise this stretch: C72–C217 and C80–C85. An N-linked (GlcNAc...) asparagine glycan is attached at N92. Residues H116, D120, and H126 each contribute to the a divalent metal cation site. The interval 116-164 is substrate binding; it reads HFIGDMTQPLHDEAYAVGGNKINVTFDGYHDNLHSDWDTYMPQKLIGGH. An N-linked (GlcNAc...) asparagine glycan is attached at N138. The a divalent metal cation site is built by H149 and D153. N-linked (GlcNAc...) asparagine glycans are attached at residues N184 and N197.

Belongs to the nuclease type I family. Requires Zn(2+) as cofactor.

The protein resides in the secreted. The catalysed reaction is Endonucleolytic cleavage to 5'-phosphomononucleotide and 5'-phosphooligonucleotide end-products.. Hydrolyzes only single-stranded DNA and RNA without apparent specificity for bases. The polypeptide is Nuclease P1 (Penicillium citrinum).